The primary structure comprises 192 residues: Small ribosomal subunit protein uS4B (192 aa).

2 positions are modified to phosphoserine: S89 and S179. The 75-residue stretch at 107-181 (RRLQTQVFKL…CKRKRLRSQQ (75 aa)) folds into the S4 RNA-binding domain. The disordered stretch occupies residues 166-192 (GGRPGRCKRKRLRSQQEGGEGEEAEEE).

Belongs to the universal ribosomal protein uS4 family. As to quaternary structure, component of the small ribosomal subunit (SSU). Mature yeast ribosomes consist of a small (40S) and a large (60S) subunit. The 40S small subunit contains 1 molecule of ribosomal RNA (18S rRNA) and at least 33 different proteins. The large 60S subunit contains 3 rRNA molecules (25S, 5.8S and 5S rRNA) and at least 46 different proteins. Interacts with snoRNA U3. uS11 interacts with MPP10. Component of the ribosomal small subunit (SSU) processome composed of at least 40 protein subunits and snoRNA U3.

The protein resides in the cytoplasm. In terms of biological role, component of the ribosome, a large ribonucleoprotein complex responsible for the synthesis of proteins in the cell. The small ribosomal subunit (SSU) binds messenger RNAs (mRNAs) and translates the encoded message by selecting cognate aminoacyl-transfer RNA (tRNA) molecules. The large subunit (LSU) contains the ribosomal catalytic site termed the peptidyl transferase center (PTC), which catalyzes the formation of peptide bonds, thereby polymerizing the amino acids delivered by tRNAs into a polypeptide chain. The nascent polypeptides leave the ribosome through a tunnel in the LSU and interact with protein factors that function in enzymatic processing, targeting, and the membrane insertion of nascent chains at the exit of the ribosomal tunnel. uS4 is involved in nucleolar processing of pre-18S ribosomal RNA and ribosome assembly. This is Small ribosomal subunit protein uS4B (rps902) from Schizosaccharomyces pombe (strain 972 / ATCC 24843) (Fission yeast).